The primary structure comprises 523 residues: UDP-glucuronosyltransferase 3A2 (523 aa).

The signal sequence occupies residues 1 to 22; sequence MAAHRRWLLMSFLFLEVILLEA. At 23–487 the chain is on the extracellular side; the sequence is AKILTISTLS…QPWHEQYMLD (465 aa). N-linked (GlcNAc...) asparagine glycosylation occurs at N52. Residues 488-508 form a helical membrane-spanning segment; that stretch reads VFLFLLGLMLGTLWLSVKVLV. At 509-523 the chain is on the cytoplasmic side; sequence AVTRYLSIATKVKEA.

This sequence belongs to the UDP-glycosyltransferase family. As to expression, highly expressed in kidney, while it is expressed at low levels in liver. Not detected in other tissues examined.

It is found in the membrane. The enzyme catalyses glucuronate acceptor + UDP-alpha-D-glucuronate = acceptor beta-D-glucuronoside + UDP + H(+). In terms of biological role, UDP-glucuronosyltransferases catalyze phase II biotransformation reactions in which lipophilic substrates are conjugated with glucuronic acid to increase water solubility and enhance excretion. They are of major importance in the conjugation and subsequent elimination of potentially toxic xenobiotics and endogenous compounds. This Mus musculus (Mouse) protein is UDP-glucuronosyltransferase 3A2 (Ugt3a2).